We begin with the raw amino-acid sequence, 124 residues long: Protein Rev (124 aa).

Serine 5 is modified (phosphoserine; by host CK2). The segment at 19–27 (IIKILYQSN) is homomultimerization. The tract at residues 25–51 (QSNPYPSPEGTRKARRNRRRRWRARQK) is disordered. Residues 35–51 (TRKARRNRRRRWRARQK) carry the Nuclear localization signal and RNA-binding (RRE) motif. The span at 37–50 (KARRNRRRRWRARQ) shows a compositional bias: basic residues. The short motif at 74–85 (LELPELDKLSLQ) is the Nuclear export signal and binding to XPO1 element. Positions 90-106 (TQDVGTSNTSQPQTATG) are enriched in polar residues. Positions 90–124 (TQDVGTSNTSQPQTATGETVPAGGNYSILGKGAKN) are disordered.

The protein belongs to the HIV-1 REV protein family. In terms of assembly, homomultimer; when bound to the RRE. Multimeric assembly is essential for activity and may involve XPO1. Binds to human KPNB1, XPO1, TNPO1, RANBP5 and IPO7. Interacts with the viral Integrase. Interacts with human KHDRBS1. Interacts with human NAP1; this interaction decreases Rev multimerization and stimulates its activity. Interacts with human DEAD-box helicases DDX3 and DDX24; these interactions may serve for viral RNA export to the cytoplasm and packaging, respectively. Interacts with human PSIP1; this interaction may inhibit HIV-1 DNA integration by promoting dissociation of the Integrase-LEDGF/p75 complex. Asymmetrically arginine dimethylated at one site by host PRMT6. Methylation impairs the RNA-binding activity and export of viral RNA from the nucleus to the cytoplasm. In terms of processing, phosphorylated by protein kinase CK2. Presence of, and maybe binding to the N-terminus of the regulatory beta subunit of CK2 is necessary for CK2-mediated Rev's phosphorylation.

It localises to the host nucleus. The protein resides in the host nucleolus. The protein localises to the host cytoplasm. Functionally, escorts unspliced or incompletely spliced viral pre-mRNAs (late transcripts) out of the nucleus of infected cells. These pre-mRNAs carry a recognition sequence called Rev responsive element (RRE) located in the env gene, that is not present in fully spliced viral mRNAs (early transcripts). This function is essential since most viral proteins are translated from unspliced or partially spliced pre-mRNAs which cannot exit the nucleus by the pathway used by fully processed cellular mRNAs. Rev itself is translated from a fully spliced mRNA that readily exits the nucleus. Rev's nuclear localization signal (NLS) binds directly to KPNB1/Importin beta-1 without previous binding to KPNA1/Importin alpha-1. KPNB1 binds to the GDP bound form of RAN (Ran-GDP) and targets Rev to the nucleus. In the nucleus, the conversion from Ran-GDP to Ran-GTP dissociates Rev from KPNB1 and allows Rev's binding to the RRE in viral pre-mRNAs. Rev multimerization on the RRE via cooperative assembly exposes its nuclear export signal (NES) to the surface. Rev can then form a complex with XPO1/CRM1 and Ran-GTP, leading to nuclear export of the complex. Conversion from Ran-GTP to Ran-GDP mediates dissociation of the Rev/RRE/XPO1/RAN complex, so that Rev can return to the nucleus for a subsequent round of export. Beside KPNB1, also seems to interact with TNPO1/Transportin-1, RANBP5/IPO5 and IPO7/RANBP7 for nuclear import. The nucleoporin-like HRB/RIP is an essential cofactor that probably indirectly interacts with Rev to release HIV RNAs from the perinuclear region to the cytoplasm. The sequence is that of Protein Rev from Pan (chimpanzees).